Consider the following 337-residue polypeptide: DNA-directed RNA polymerase subunit alpha (337 aa).

The alpha N-terminal domain (alpha-NTD) stretch occupies residues 1-233; it reads MIQKNWQELI…DQLSVFVNFK (233 aa). Positions 249–337 are alpha C-terminal domain (alpha-CTD); it reads FNPALLKKVD…DLAKHYEDQY (89 aa).

Belongs to the RNA polymerase alpha chain family. As to quaternary structure, homodimer. The RNAP catalytic core consists of 2 alpha, 1 beta, 1 beta' and 1 omega subunit. When a sigma factor is associated with the core the holoenzyme is formed, which can initiate transcription.

It catalyses the reaction RNA(n) + a ribonucleoside 5'-triphosphate = RNA(n+1) + diphosphate. In terms of biological role, DNA-dependent RNA polymerase catalyzes the transcription of DNA into RNA using the four ribonucleoside triphosphates as substrates. The sequence is that of DNA-directed RNA polymerase subunit alpha from Bartonella bacilliformis (strain ATCC 35685 / KC583 / Herrer 020/F12,63).